We begin with the raw amino-acid sequence, 512 residues long: NAD(P)H-quinone oxidoreductase chain 4, chloroplastic (512 aa).

The next 14 membrane-spanning stretches (helical) occupy residues 4-24, 34-54, 87-107, 111-131, 134-154, 167-187, 210-230, 241-261, 273-293, 312-332, 333-353, 373-395, 416-436, and 462-482; these read LPWLTIIVLFPILAGLLIPFI, WYALGVGILDFLLITYIFGYH, MPLVLLTGFVTTLAILGAWPV, AKLFYFLMLAMYSGQIGVFVS, LLLFFFMWELELIPVYLLLLV, FILYTAIGSIFILLAGLTMAF, ILLYIGFLIAYAVKLPAFPLH, HYSTCMLLAGILLKMGGYALI, LIFAPFLIIIGVINIIYAALT, MGFVLIGIGSLTNLGLSGAVL, QMISHGLIGASLFFLAGTTYD, TFAMFTTCSLASLALPGMSGFVA, IITFLEGIGIILTPIYLLSML, and IFVITCLVLPILGIGIYPKMA.

It belongs to the complex I subunit 4 family.

It is found in the plastid. The protein resides in the chloroplast thylakoid membrane. It carries out the reaction a plastoquinone + NADH + (n+1) H(+)(in) = a plastoquinol + NAD(+) + n H(+)(out). It catalyses the reaction a plastoquinone + NADPH + (n+1) H(+)(in) = a plastoquinol + NADP(+) + n H(+)(out). The sequence is that of NAD(P)H-quinone oxidoreductase chain 4, chloroplastic from Chlorokybus atmophyticus (Soil alga).